The sequence spans 168 residues: Crossover junction endodeoxyribonuclease RuvC (168 aa).

Catalysis depends on residues aspartate 9, glutamate 69, and aspartate 141. Residues aspartate 9, glutamate 69, and aspartate 141 each coordinate Mg(2+).

The protein belongs to the RuvC family. Homodimer which binds Holliday junction (HJ) DNA. The HJ becomes 2-fold symmetrical on binding to RuvC with unstacked arms; it has a different conformation from HJ DNA in complex with RuvA. In the full resolvosome a probable DNA-RuvA(4)-RuvB(12)-RuvC(2) complex forms which resolves the HJ. Requires Mg(2+) as cofactor.

The protein resides in the cytoplasm. It catalyses the reaction Endonucleolytic cleavage at a junction such as a reciprocal single-stranded crossover between two homologous DNA duplexes (Holliday junction).. Functionally, the RuvA-RuvB-RuvC complex processes Holliday junction (HJ) DNA during genetic recombination and DNA repair. Endonuclease that resolves HJ intermediates. Cleaves cruciform DNA by making single-stranded nicks across the HJ at symmetrical positions within the homologous arms, yielding a 5'-phosphate and a 3'-hydroxyl group; requires a central core of homology in the junction. The consensus cleavage sequence is 5'-(A/T)TT(C/G)-3'. Cleavage occurs on the 3'-side of the TT dinucleotide at the point of strand exchange. HJ branch migration catalyzed by RuvA-RuvB allows RuvC to scan DNA until it finds its consensus sequence, where it cleaves and resolves the cruciform DNA. The protein is Crossover junction endodeoxyribonuclease RuvC of Bdellovibrio bacteriovorus (strain ATCC 15356 / DSM 50701 / NCIMB 9529 / HD100).